Consider the following 569-residue polypeptide: Isocitrate dehydrogenase kinase/phosphatase (569 aa).

ATP-binding positions include 316–322 and K337; that span reads APGVRGM. Residue D372 is part of the active site.

This sequence belongs to the AceK family.

It localises to the cytoplasm. The catalysed reaction is L-seryl-[isocitrate dehydrogenase] + ATP = O-phospho-L-seryl-[isocitrate dehydrogenase] + ADP + H(+). Functionally, bifunctional enzyme which can phosphorylate or dephosphorylate isocitrate dehydrogenase (IDH) on a specific serine residue. This is a regulatory mechanism which enables bacteria to bypass the Krebs cycle via the glyoxylate shunt in response to the source of carbon. When bacteria are grown on glucose, IDH is fully active and unphosphorylated, but when grown on acetate or ethanol, the activity of IDH declines drastically concomitant with its phosphorylation. In Pseudomonas putida (strain W619), this protein is Isocitrate dehydrogenase kinase/phosphatase.